Reading from the N-terminus, the 419-residue chain is Light-independent protochlorophyllide reductase subunit N (419 aa).

Positions 20, 45, and 102 each coordinate [4Fe-4S] cluster.

The protein belongs to the BchN/ChlN family. As to quaternary structure, protochlorophyllide reductase is composed of three subunits; BchL, BchN and BchB. Forms a heterotetramer of two BchB and two BchN subunits. Requires [4Fe-4S] cluster as cofactor.

The enzyme catalyses chlorophyllide a + oxidized 2[4Fe-4S]-[ferredoxin] + 2 ADP + 2 phosphate = protochlorophyllide a + reduced 2[4Fe-4S]-[ferredoxin] + 2 ATP + 2 H2O. The protein operates within porphyrin-containing compound metabolism; bacteriochlorophyll biosynthesis (light-independent). Its function is as follows. Component of the dark-operative protochlorophyllide reductase (DPOR) that uses Mg-ATP and reduced ferredoxin to reduce ring D of protochlorophyllide (Pchlide) to form chlorophyllide a (Chlide). This reaction is light-independent. The NB-protein (BchN-BchB) is the catalytic component of the complex. In Chlorobaculum tepidum (strain ATCC 49652 / DSM 12025 / NBRC 103806 / TLS) (Chlorobium tepidum), this protein is Light-independent protochlorophyllide reductase subunit N.